The primary structure comprises 576 residues: 2-succinyl-5-enolpyruvyl-6-hydroxy-3-cyclohexene-1-carboxylate synthase (576 aa).

The protein belongs to the TPP enzyme family. MenD subfamily. In terms of assembly, homodimer. Requires Mg(2+) as cofactor. The cofactor is Mn(2+). Thiamine diphosphate serves as cofactor.

The catalysed reaction is isochorismate + 2-oxoglutarate + H(+) = 5-enolpyruvoyl-6-hydroxy-2-succinyl-cyclohex-3-ene-1-carboxylate + CO2. Its pathway is quinol/quinone metabolism; 1,4-dihydroxy-2-naphthoate biosynthesis; 1,4-dihydroxy-2-naphthoate from chorismate: step 2/7. It functions in the pathway quinol/quinone metabolism; menaquinone biosynthesis. Its function is as follows. Catalyzes the thiamine diphosphate-dependent decarboxylation of 2-oxoglutarate and the subsequent addition of the resulting succinic semialdehyde-thiamine pyrophosphate anion to isochorismate to yield 2-succinyl-5-enolpyruvyl-6-hydroxy-3-cyclohexene-1-carboxylate (SEPHCHC). The polypeptide is 2-succinyl-5-enolpyruvyl-6-hydroxy-3-cyclohexene-1-carboxylate synthase (Aliivibrio fischeri (strain ATCC 700601 / ES114) (Vibrio fischeri)).